The following is a 265-amino-acid chain: Hydroxyethylthiazole kinase (265 aa).

M43 serves as a coordination point for substrate. ATP contacts are provided by K118 and T165. Residue G192 participates in substrate binding.

It belongs to the Thz kinase family. Requires Mg(2+) as cofactor.

It catalyses the reaction 5-(2-hydroxyethyl)-4-methylthiazole + ATP = 4-methyl-5-(2-phosphooxyethyl)-thiazole + ADP + H(+). The protein operates within cofactor biosynthesis; thiamine diphosphate biosynthesis; 4-methyl-5-(2-phosphoethyl)-thiazole from 5-(2-hydroxyethyl)-4-methylthiazole: step 1/1. Catalyzes the phosphorylation of the hydroxyl group of 4-methyl-5-beta-hydroxyethylthiazole (THZ). The sequence is that of Hydroxyethylthiazole kinase from Pyrococcus abyssi (strain GE5 / Orsay).